We begin with the raw amino-acid sequence, 306 residues long: tRNA-cytidine(32) 2-sulfurtransferase (306 aa).

Residues 49-54 (SGGKDS) carry the PP-loop motif motif. The [4Fe-4S] cluster site is built by cysteine 124, cysteine 127, and cysteine 215.

Belongs to the TtcA family. Homodimer. It depends on Mg(2+) as a cofactor. [4Fe-4S] cluster serves as cofactor.

It localises to the cytoplasm. It carries out the reaction cytidine(32) in tRNA + S-sulfanyl-L-cysteinyl-[cysteine desulfurase] + AH2 + ATP = 2-thiocytidine(32) in tRNA + L-cysteinyl-[cysteine desulfurase] + A + AMP + diphosphate + H(+). Its pathway is tRNA modification. Its function is as follows. Catalyzes the ATP-dependent 2-thiolation of cytidine in position 32 of tRNA, to form 2-thiocytidine (s(2)C32). The sulfur atoms are provided by the cysteine/cysteine desulfurase (IscS) system. This is tRNA-cytidine(32) 2-sulfurtransferase from Azoarcus sp. (strain BH72).